A 198-amino-acid chain; its full sequence is Proteasome subunit beta 2 (198 aa).

The propeptide at 1–4 (MVLA) is removed in mature form; by autocatalysis. Residue threonine 5 is the Nucleophile of the active site.

Belongs to the peptidase T1B family. In terms of assembly, the 20S proteasome core is composed of 14 alpha and 14 beta subunits that assemble into four stacked heptameric rings, resulting in a barrel-shaped structure. The two inner rings, each composed of seven catalytic beta subunits, are sandwiched by two outer rings, each composed of seven alpha subunits. The catalytic chamber with the active sites is on the inside of the barrel. Has a gated structure, the ends of the cylinder being occluded by the N-termini of the alpha-subunits. Is capped at one or both ends by the proteasome regulatory ATPase, PAN.

It is found in the cytoplasm. The enzyme catalyses Cleavage of peptide bonds with very broad specificity.. The formation of the proteasomal ATPase PAN-20S proteasome complex, via the docking of the C-termini of PAN into the intersubunit pockets in the alpha-rings, triggers opening of the gate for substrate entry. Interconversion between the open-gate and close-gate conformations leads to a dynamic regulation of the 20S proteasome proteolysis activity. Component of the proteasome core, a large protease complex with broad specificity involved in protein degradation. The polypeptide is Proteasome subunit beta 2 (Korarchaeum cryptofilum (strain OPF8)).